Here is a 134-residue protein sequence, read N- to C-terminus: FK506-binding protein 2 (134 aa).

An N-terminal signal peptide occupies residues 1–19; that stretch reads MRFSIFSTLLVSLATLSTA. Residues 39–127 enclose the PPIase FKBP-type domain; sequence GDTVQMHYKG…IFETELVGID (89 aa). Positions 131-134 match the Prevents secretion from ER motif; the sequence is KDEL.

It belongs to the FKBP-type PPIase family. FKBP2 subfamily.

Its subcellular location is the endoplasmic reticulum. The catalysed reaction is [protein]-peptidylproline (omega=180) = [protein]-peptidylproline (omega=0). With respect to regulation, inhibited by both FK506 and rapamycin. Functionally, PPIases accelerate the folding of proteins. It catalyzes the cis-trans isomerization of proline imidic peptide bonds in oligopeptides. This Aspergillus oryzae (strain ATCC 42149 / RIB 40) (Yellow koji mold) protein is FK506-binding protein 2 (fpr2).